We begin with the raw amino-acid sequence, 261 residues long: UPF0177 protein YvdC (261 aa).

The next 6 helical transmembrane spans lie at Trp15–Leu35, Val43–Ile63, Leu84–Ala104, Ile123–Ile143, Tyr197–Tyr217, and Phe239–Val259.

It belongs to the UPF0177 family.

It localises to the cell membrane. The protein is UPF0177 protein YvdC (yvdC) of Lactococcus lactis subsp. lactis (strain IL1403) (Streptococcus lactis).